The chain runs to 74 residues: Small ribosomal subunit protein bS18 (74 aa).

The protein belongs to the bacterial ribosomal protein bS18 family. As to quaternary structure, part of the 30S ribosomal subunit. Forms a tight heterodimer with protein bS6.

In terms of biological role, binds as a heterodimer with protein bS6 to the central domain of the 16S rRNA, where it helps stabilize the platform of the 30S subunit. The chain is Small ribosomal subunit protein bS18 from Thioalkalivibrio sulfidiphilus (strain HL-EbGR7).